Consider the following 20-residue polypeptide: Hemocyanin subunit Ia (20 aa).

Residues 1 to 20 (ADXQPGDSTDKLLAQKQDDV) form a disordered region.

This sequence belongs to the tyrosinase family. Hemocyanin subfamily. Composed of 3 major subunits (IB, II and III) and 1 minor subunit (IA) which form homohexamers and heterohexamers. May also form larger structures. In terms of tissue distribution, hemolymph.

It localises to the secreted. The protein resides in the extracellular space. Hemocyanins are copper-containing oxygen carriers occurring freely dissolved in the hemolymph of many mollusks and arthropods. The protein is Hemocyanin subunit Ia of Panulirus japonicus (Japanese spiny lobster).